Reading from the N-terminus, the 117-residue chain is MDKKSARIRRAARARHMMREQGVTRLVIHRTPRHIYAQVIAPNGSEVLAAASTVEKVISEQVKYTGNKDAAAVVGKVVAERALAKGVKDVAFDRSGFKYHGRVQTLADAAREAGLQF.

The protein belongs to the universal ribosomal protein uL18 family. Part of the 50S ribosomal subunit; part of the 5S rRNA/L5/L18/L25 subcomplex. Contacts the 5S and 23S rRNAs.

Its function is as follows. This is one of the proteins that bind and probably mediate the attachment of the 5S RNA into the large ribosomal subunit, where it forms part of the central protuberance. This Pasteurella multocida (strain Pm70) protein is Large ribosomal subunit protein uL18.